The primary structure comprises 442 residues: ATP-dependent protease ATPase subunit HslU (442 aa).

ATP-binding positions include isoleucine 18, 60–65 (GVGKTE), aspartate 255, glutamate 320, and arginine 392.

This sequence belongs to the ClpX chaperone family. HslU subfamily. In terms of assembly, a double ring-shaped homohexamer of HslV is capped on each side by a ring-shaped HslU homohexamer. The assembly of the HslU/HslV complex is dependent on binding of ATP.

The protein resides in the cytoplasm. Functionally, ATPase subunit of a proteasome-like degradation complex; this subunit has chaperone activity. The binding of ATP and its subsequent hydrolysis by HslU are essential for unfolding of protein substrates subsequently hydrolyzed by HslV. HslU recognizes the N-terminal part of its protein substrates and unfolds these before they are guided to HslV for hydrolysis. This chain is ATP-dependent protease ATPase subunit HslU, found in Aeromonas salmonicida (strain A449).